We begin with the raw amino-acid sequence, 208 residues long: Uracil phosphoribosyltransferase (208 aa).

Residues Arg78, Arg103, and 130 to 138 contribute to the 5-phospho-alpha-D-ribose 1-diphosphate site; that span reads DPMLATGGS. Uracil contacts are provided by residues Ile193 and 198-200; that span reads GDA. Asp199 provides a ligand contact to 5-phospho-alpha-D-ribose 1-diphosphate.

The protein belongs to the UPRTase family. Requires Mg(2+) as cofactor.

It catalyses the reaction UMP + diphosphate = 5-phospho-alpha-D-ribose 1-diphosphate + uracil. Its pathway is pyrimidine metabolism; UMP biosynthesis via salvage pathway; UMP from uracil: step 1/1. With respect to regulation, allosterically activated by GTP. Its function is as follows. Catalyzes the conversion of uracil and 5-phospho-alpha-D-ribose 1-diphosphate (PRPP) to UMP and diphosphate. This is Uracil phosphoribosyltransferase from Colwellia psychrerythraea (strain 34H / ATCC BAA-681) (Vibrio psychroerythus).